Consider the following 322-residue polypeptide: Mitochondrial glutamate carrier 1 (322 aa).

Solcar repeat units lie at residues 6–93, 101–214, and 223–312; these read ISLP…FRYQ, LTLF…LNEL, and SPFY…GIAE. The next 6 helical transmembrane spans lie at 12–32, 62–82, 107–127, 189–209, 223–243, and 292–312; these read LING…IDLA, YFGM…EKAI, MLAG…MEML, GLGA…PLFA, SPFY…AVAV, and ALVI…GIAE.

It belongs to the mitochondrial carrier (TC 2.A.29) family.

Its subcellular location is the mitochondrion inner membrane. The catalysed reaction is L-glutamate(in) + H(+)(in) = L-glutamate(out) + H(+)(out). Its function is as follows. Mitochondrial glutamate/H(+) symporter. Responsible for the transport of glutamate from the cytosol into the mitochondrial matrix with the concomitant import of a proton. Plays a role in the control of glucose-stimulated insulin secretion. This chain is Mitochondrial glutamate carrier 1 (SLC25A22), found in Bos taurus (Bovine).